A 144-amino-acid chain; its full sequence is Large ribosomal subunit protein uL16 (144 aa).

The span at 1–17 (MLQPKKTKFRRQQKGRA) shows a compositional bias: basic residues. The tract at residues 1–22 (MLQPKKTKFRRQQKGRAKGNAQ) is disordered.

The protein belongs to the universal ribosomal protein uL16 family. In terms of assembly, part of the 50S ribosomal subunit.

In terms of biological role, binds 23S rRNA and is also seen to make contacts with the A and possibly P site tRNAs. This is Large ribosomal subunit protein uL16 from Bacteroides fragilis (strain ATCC 25285 / DSM 2151 / CCUG 4856 / JCM 11019 / LMG 10263 / NCTC 9343 / Onslow / VPI 2553 / EN-2).